Reading from the N-terminus, the 1328-residue chain is Myb-binding protein 1A (1328 aa).

Positions 1–22 (MESRDPAQPMSPGEATQSGARP) are disordered. An interaction with MYB region spans residues 1–582 (MESRDPAQPM…WDRMLQTLKE (582 aa)). Phosphoserine is present on Ser-11. Lys-71 and Lys-158 each carry N6-acetyllysine. Short sequence motifs (nuclear export signal) lie at residues 240 to 258 (SDEN…ASSV) and 263 to 281 (KLPA…EDKF). The segment at 698–753 (SEDENDRVVVTDDSDERRLKGAEDKSEEGEDNRSSESEEESEGEESEEEERDGDVD) is disordered. The segment covering 703–721 (DRVVVTDDSDERRLKGAED) has biased composition (basic and acidic residues). Acidic residues predominate over residues 734 to 752 (SEEESEGEESEEEERDGDV). Ser-775 is modified (phosphoserine). The tract at residues 1146-1292 (RPKLEKKDAK…KKGVLGKSPL (147 aa)) is disordered. The segment covering 1147-1156 (PKLEKKDAKE) has biased composition (basic and acidic residues). Lys-1148 participates in a covalent cross-link: Glycyl lysine isopeptide (Lys-Gly) (interchain with G-Cter in SUMO2). The segment at 1151-1328 (KKDAKEIPSA…KAQVRKAGKP (178 aa)) is required for nuclear and nucleolar localization. A phosphoserine mark is found at Ser-1159 and Ser-1163. Basic residues predominate over residues 1166–1184 (SKKRKKKGFLPETKKRKKR). Residue Ser-1186 is modified to Phosphoserine. 2 positions are modified to phosphothreonine: Thr-1190 and Thr-1196. Ser-1207 is subject to Phosphoserine. A compositionally biased stretch (basic residues) spans 1209–1218 (GRKKRNRTKA). Ser-1232 is subject to Phosphoserine. A Phosphothreonine modification is found at Thr-1239. Position 1241 is a phosphoserine (Ser-1241). Thr-1244 is subject to Phosphothreonine. Phosphoserine is present on residues Ser-1248 and Ser-1267. Phosphothreonine is present on Thr-1269. Ser-1290 and Ser-1303 each carry phosphoserine. Residues 1306-1328 (IRSPSLLQSGAKKKAQVRKAGKP) are disordered. Arg-1307 carries the post-translational modification Citrulline. A phosphoserine mark is found at Ser-1308, Ser-1310, and Ser-1314. Over residues 1316 to 1328 (AKKKAQVRKAGKP) the composition is skewed to basic residues.

This sequence belongs to the MYBBP1A family. As to quaternary structure, binds to and represses JUN and MYB via the leucine zipper regions present in these proteins. Also binds to and represses PPARGC1A: this interaction is abrogated when PPARGC1A is phosphorylated by MAPK1/ERK. Binds to and stimulates transcription by AHR. Binds to KPNA2. Interacts with CLOCK and CRY1. Component of the B-WICH complex, at least composed of SMARCA5/SNF2H, BAZ1B/WSTF, SF3B1, DEK, MYO1C, ERCC6, MYBBP1A and DDX21. Post-translationally, citrullinated by PADI4.

The protein localises to the cytoplasm. Its subcellular location is the nucleus. The protein resides in the nucleolus. Its function is as follows. May activate or repress transcription via interactions with sequence specific DNA-binding proteins. Repression may be mediated at least in part by histone deacetylase activity (HDAC activity). Acts as a corepressor and in concert with CRY1, represses the transcription of the core circadian clock component PER2. Preferentially binds to dimethylated histone H3 'Lys-9' (H3K9me2) on the PER2 promoter. Has a role in rRNA biogenesis together with PWP1. This is Myb-binding protein 1A (MYBBP1A) from Homo sapiens (Human).